A 234-amino-acid chain; its full sequence is Uridylate kinase (234 aa).

10–11 (GS) is an ATP binding site. G44 is a UMP binding site. The ATP site is built by G45 and R49. UMP contacts are provided by residues D66 and 114–120 (ITPGQTT). ATP contacts are provided by T140, Y146, and D149.

This sequence belongs to the UMP kinase family. Homohexamer.

Its subcellular location is the cytoplasm. The enzyme catalyses UMP + ATP = UDP + ADP. It participates in pyrimidine metabolism; CTP biosynthesis via de novo pathway; UDP from UMP (UMPK route): step 1/1. Its activity is regulated as follows. Inhibited by UTP. In terms of biological role, catalyzes the reversible phosphorylation of UMP to UDP. The protein is Uridylate kinase of Methanoregula boonei (strain DSM 21154 / JCM 14090 / 6A8).